The sequence spans 239 residues: MARLGVNIDHVATLRQARGGTEPDPVAAAAIAEFAGADGITIHLREDRRHIQDRDLKILRQTVQTRLNLEMAATDEMVAIALAVKPEACTLVPEKRAELTTEGGLDVRIHQEALKVAIEKLQAGGIIVSLFIDPDPDQIKVANKIGADYIEIHTGSFAEAKSWKEEELELIKIENAVKLARKLDLGVNAGHGLSYSNVKKVAAIGGIEEFNIGHSIMSRAILVGLDRAVRDMSELVRYA.

N7 lines the 3-amino-2-oxopropyl phosphate pocket. A 1-deoxy-D-xylulose 5-phosphate-binding site is contributed by 9–10; sequence DH. 3-amino-2-oxopropyl phosphate is bound at residue R18. Catalysis depends on H43, which acts as the Proton acceptor. The 1-deoxy-D-xylulose 5-phosphate site is built by R45 and H50. The Proton acceptor role is filled by E70. Residue T100 coordinates 1-deoxy-D-xylulose 5-phosphate. The active-site Proton donor is H191. Residues G192 and 213 to 214 contribute to the 3-amino-2-oxopropyl phosphate site; that span reads GH.

This sequence belongs to the PNP synthase family. In terms of assembly, homooctamer; tetramer of dimers.

The protein resides in the cytoplasm. It carries out the reaction 3-amino-2-oxopropyl phosphate + 1-deoxy-D-xylulose 5-phosphate = pyridoxine 5'-phosphate + phosphate + 2 H2O + H(+). It participates in cofactor biosynthesis; pyridoxine 5'-phosphate biosynthesis; pyridoxine 5'-phosphate from D-erythrose 4-phosphate: step 5/5. Catalyzes the complicated ring closure reaction between the two acyclic compounds 1-deoxy-D-xylulose-5-phosphate (DXP) and 3-amino-2-oxopropyl phosphate (1-amino-acetone-3-phosphate or AAP) to form pyridoxine 5'-phosphate (PNP) and inorganic phosphate. This Citrifermentans bemidjiense (strain ATCC BAA-1014 / DSM 16622 / JCM 12645 / Bem) (Geobacter bemidjiensis) protein is Pyridoxine 5'-phosphate synthase.